We begin with the raw amino-acid sequence, 695 residues long: MAP kinase phosphatase with leucine-rich repeats protein 2 (695 aa).

LRR repeat units lie at residues 101 to 122, 124 to 145, 147 to 167, 170 to 191, 193 to 214, 215 to 235, 239 to 260, 262 to 283, 286 to 307, and 309 to 330; these read SLKS…ITLL, NLNH…LSQL, SLET…NVCK, SLTS…FLNL, NLKD…LPNN, IEKL…SLIR, SLTT…LSCL, NVKT…VLGS, SLVT…VILL, and NLRI…IPTE. Positions 413–426 are enriched in low complexity; the sequence is SENNEINENNQLLT. 2 disordered regions span residues 413–438 and 492–519; these read SENN…KNDS and QEQL…QQQQ. The 140-residue stretch at 556-695 folds into the Tyrosine-protein phosphatase domain; that stretch reads VPDLIIDKLY…LKKFEKDLFK (140 aa). The Phosphocysteine intermediate role is filled by Cys639.

The protein belongs to the protein-tyrosine phosphatase family. Non-receptor class dual specificity subfamily.

The enzyme catalyses O-phospho-L-tyrosyl-[protein] + H2O = L-tyrosyl-[protein] + phosphate. It catalyses the reaction O-phospho-L-seryl-[protein] + H2O = L-seryl-[protein] + phosphate. It carries out the reaction O-phospho-L-threonyl-[protein] + H2O = L-threonyl-[protein] + phosphate. Functionally, probable phosphatase with dual specificity toward Ser/Thr and Tyr-containing proteins. The polypeptide is MAP kinase phosphatase with leucine-rich repeats protein 2 (mpl2) (Dictyostelium discoideum (Social amoeba)).